The primary structure comprises 304 residues: N-acetyl-D-glucosamine kinase (304 aa).

ATP-binding positions include 4–11 (GLDIGGTK) and 133–140 (GFGGGFVL). Positions 157, 178, 180, and 185 each coordinate Zn(2+).

It belongs to the ROK (NagC/XylR) family. NagK subfamily.

The catalysed reaction is N-acetyl-D-glucosamine + ATP = N-acetyl-D-glucosamine 6-phosphate + ADP + H(+). The protein operates within cell wall biogenesis; peptidoglycan recycling. Its function is as follows. Catalyzes the phosphorylation of N-acetyl-D-glucosamine (GlcNAc) derived from cell-wall degradation, yielding GlcNAc-6-P. The sequence is that of N-acetyl-D-glucosamine kinase from Haemophilus influenzae (strain 86-028NP).